Reading from the N-terminus, the 119-residue chain is Beta-2-microglobulin (119 aa).

The N-terminal stretch at 1–20 (MARSVVVALLVLLSLSGLEA) is a signal peptide. The region spanning 25-114 (PKIQVYSRHP…VTFSTPKTVK (90 aa)) is the Ig-like C1-type domain. The cysteines at positions 45 and 100 are disulfide-linked.

This sequence belongs to the beta-2-microglobulin family. Heterodimer of an alpha chain and a beta chain. Beta-2-microglobulin is the beta-chain of major histocompatibility complex class I molecules.

The protein localises to the secreted. Component of the class I major histocompatibility complex (MHC). Involved in the presentation of peptide antigens to the immune system. In Ateles paniscus (Black spider monkey), this protein is Beta-2-microglobulin (B2M).